Here is a 308-residue protein sequence, read N- to C-terminus: Aspartate carbamoyltransferase catalytic subunit (308 aa).

Carbamoyl phosphate contacts are provided by Arg-58 and Thr-59. Residue Lys-86 coordinates L-aspartate. Carbamoyl phosphate contacts are provided by Arg-108, His-136, and Gln-139. Residues Arg-169 and Arg-222 each coordinate L-aspartate. The carbamoyl phosphate site is built by Gly-264 and Pro-265.

This sequence belongs to the aspartate/ornithine carbamoyltransferase superfamily. ATCase family. As to quaternary structure, heterododecamer (2C3:3R2) of six catalytic PyrB chains organized as two trimers (C3), and six regulatory PyrI chains organized as three dimers (R2).

The enzyme catalyses carbamoyl phosphate + L-aspartate = N-carbamoyl-L-aspartate + phosphate + H(+). It participates in pyrimidine metabolism; UMP biosynthesis via de novo pathway; (S)-dihydroorotate from bicarbonate: step 2/3. Functionally, catalyzes the condensation of carbamoyl phosphate and aspartate to form carbamoyl aspartate and inorganic phosphate, the committed step in the de novo pyrimidine nucleotide biosynthesis pathway. This is Aspartate carbamoyltransferase catalytic subunit from Campylobacter hominis (strain ATCC BAA-381 / DSM 21671 / CCUG 45161 / LMG 19568 / NCTC 13146 / CH001A).